A 55-amino-acid polypeptide reads, in one-letter code: Bowman-Birk type proteinase inhibitor B1 (55 aa).

4 cysteine pairs are disulfide-bonded: Cys-6–Cys-53, Cys-12–Cys-17, Cys-26–Cys-33, and Cys-30–Cys-45.

This sequence belongs to the Bowman-Birk serine protease inhibitor family. As to expression, expressed in bulb (at protein level).

In terms of biological role, serine protease inhibitor. Weakly inhibits trypsin (Ki = 167 nM). Does not inhibit bacterial subtilisin or mamallian chymotrypsin. The polypeptide is Bowman-Birk type proteinase inhibitor B1 (Hyacinthus orientalis (Common hyacinth)).